A 113-amino-acid chain; its full sequence is uncharacterized protein (113 aa).

Residues 78-113 (YCNRGSERTNQGNRGSAPSKILLPRTIADPFRGGPE) are disordered.

This is an uncharacterized protein from Halobacterium phage phiH (Bacteriophage phi-H).